The chain runs to 142 residues: Large-conductance mechanosensitive channel (142 aa).

3 helical membrane passes run 14-34 (VMDLAVGVIIGAAFTKIVTSV), 38-58 (LVMPIVGAITGGGFDFSNYFL), and 82-102 (GSFITVLINFMILAWIIFLLV).

It belongs to the MscL family. As to quaternary structure, homopentamer.

The protein localises to the cell inner membrane. Its function is as follows. Channel that opens in response to stretch forces in the membrane lipid bilayer. May participate in the regulation of osmotic pressure changes within the cell. The polypeptide is Large-conductance mechanosensitive channel (Sinorhizobium fredii (strain NBRC 101917 / NGR234)).